An 84-amino-acid chain; its full sequence is RNA-binding protein Hfq (84 aa).

One can recognise a Sm domain in the interval 11–71 (DTFLNFVRKN…ISTIMPGAPI (61 aa)).

It belongs to the Hfq family. In terms of assembly, homohexamer.

Functionally, RNA chaperone that binds small regulatory RNA (sRNAs) and mRNAs to facilitate mRNA translational regulation in response to envelope stress, environmental stress and changes in metabolite concentrations. Also binds with high specificity to tRNAs. In Beijerinckia indica subsp. indica (strain ATCC 9039 / DSM 1715 / NCIMB 8712), this protein is RNA-binding protein Hfq.